Reading from the N-terminus, the 732-residue chain is Myosin heavy chain kinase B (732 aa).

The 205-residue stretch at 124–328 (DPYTTTAQWT…ICQYLNLQSI (205 aa)) folds into the Alpha-type protein kinase domain. Residue 298 to 303 (GIGNLG) participates in ATP binding. The disordered stretch occupies residues 331 to 428 (KSEKSDCGTV…TNKERSKSKS (98 aa)). Over residues 356–394 (NNNNNNNNNNNNNNNNNNSNNNNNNNSSISKSLVEISSG) the composition is skewed to low complexity. Over residues 395–404 (SKERNDRDSP) the composition is skewed to basic and acidic residues. Residues 405 to 419 (SRQLFVSNDGNTLNT) show a composition bias toward polar residues. WD repeat units lie at residues 458–486 (KGYHVTSHLCICDNLLFTGCSDNSIRVYD), 500–528 (GHEGPVESICYNDQYLFSGSSDHSIKVWD), 540–568 (GHDKPVHTVLLNDKYLFSGSSDKTIKVWD), 580–608 (SHARAVKTLCISGQYLFSGSNDKTIKVWD), 620–648 (GHTKWVTTICILGTNLYSGSYDKTIRVWN), 660–688 (GHDRWVEHMVICDKLLFTASDDNTIKIWD), and 700–730 (GHNATVQCLAVWEDKKCVISCSHDQSIRVWG).

Belongs to the protein kinase superfamily. Alpha-type protein kinase family. ALPK subfamily.

It catalyses the reaction L-threonyl-[myosin heavy-chain] + ATP = O-phospho-L-threonyl-[myosin heavy-chain] + ADP + H(+). Functionally, catalyzes its autophosphorylation, which is needed for enzymatic activity and phosphorylates myosin II heavy chain at a threonine in the C-terminal tail region. This phosphorylation is critical in regulating the assembly and disassembly of myosin II filament. Participates in control of myosin localization. The chain is Myosin heavy chain kinase B (mhkB) from Dictyostelium discoideum (Social amoeba).